Consider the following 428-residue polypeptide: tRNA(Ile)-lysidine synthase (428 aa).

Residue 28–33 (SGGVDS) participates in ATP binding.

This sequence belongs to the tRNA(Ile)-lysidine synthase family.

The protein localises to the cytoplasm. It carries out the reaction cytidine(34) in tRNA(Ile2) + L-lysine + ATP = lysidine(34) in tRNA(Ile2) + AMP + diphosphate + H(+). In terms of biological role, ligates lysine onto the cytidine present at position 34 of the AUA codon-specific tRNA(Ile) that contains the anticodon CAU, in an ATP-dependent manner. Cytidine is converted to lysidine, thus changing the amino acid specificity of the tRNA from methionine to isoleucine. The sequence is that of tRNA(Ile)-lysidine synthase from Streptococcus pyogenes serotype M18 (strain MGAS8232).